A 565-amino-acid chain; its full sequence is Putative ribonucleoside-diphosphate reductase large subunit (565 aa).

Substrate is bound by residues Ser60, Ser74–Cys75, Gly103, Asn256–Glu260, and Pro400–Ser404. Cys75 and Cys273 are oxidised to a cystine. The active-site Proton acceptor is the Asn256. The Cysteine radical intermediate role is filled by Cys258. Glu260 serves as the catalytic Proton acceptor.

The protein belongs to the ribonucleoside diphosphate reductase large chain family. As to quaternary structure, heterotetramer composed of a homodimer of the large subunit (R1) and a homodimer of the small subunit (R2). Larger multisubunit protein complex are also active, composed of (R1)n(R2)n.

The catalysed reaction is a 2'-deoxyribonucleoside 5'-diphosphate + [thioredoxin]-disulfide + H2O = a ribonucleoside 5'-diphosphate + [thioredoxin]-dithiol. Under complex allosteric control mediated by deoxynucleoside triphosphates and ATP binding. The type of nucleotide bound at the specificity site determines substrate preference. It seems probable that ATP makes the enzyme reduce CDP and UDP, dGTP favors ADP reduction and dTTP favors GDP reduction. In terms of biological role, ribonucleoside-diphosphate reductase holoenzyme provides the precursors necessary for viral DNA synthesis. Allows virus growth in non-dividing cells. Catalyzes the biosynthesis of deoxyribonucleotides from the corresponding ribonucleotides. The polypeptide is Putative ribonucleoside-diphosphate reductase large subunit (Frog virus 3 (isolate Goorha) (FV-3)).